We begin with the raw amino-acid sequence, 371 residues long: Peptide chain release factor 2 (371 aa).

Position 251 is an N5-methylglutamine (Q251).

It belongs to the prokaryotic/mitochondrial release factor family. In terms of processing, methylated by PrmC. Methylation increases the termination efficiency of RF2.

It is found in the cytoplasm. In terms of biological role, peptide chain release factor 2 directs the termination of translation in response to the peptide chain termination codons UGA and UAA. In Pseudarthrobacter chlorophenolicus (strain ATCC 700700 / DSM 12829 / CIP 107037 / JCM 12360 / KCTC 9906 / NCIMB 13794 / A6) (Arthrobacter chlorophenolicus), this protein is Peptide chain release factor 2.